Reading from the N-terminus, the 340-residue chain is Ketol-acid reductoisomerase (NADP(+)) (340 aa).

Residues 1-182 form the KARI N-terminal Rossmann domain; the sequence is MRVYYDRDCD…GGGRSGIIET (182 aa). Residues 24-27, arginine 48, serine 51, serine 53, and 83-86 contribute to the NADP(+) site; these read YGSQ and DELQ. The active site involves histidine 108. Glycine 134 serves as a coordination point for NADP(+). Positions 183-329 constitute a KARI C-terminal knotted domain; that stretch reads NFRQECETDL…EKLRGMMPWI (147 aa). 4 residues coordinate Mg(2+): aspartate 191, glutamate 195, glutamate 227, and glutamate 231. Position 252 (serine 252) interacts with substrate.

The protein belongs to the ketol-acid reductoisomerase family. Requires Mg(2+) as cofactor.

The catalysed reaction is (2R)-2,3-dihydroxy-3-methylbutanoate + NADP(+) = (2S)-2-acetolactate + NADPH + H(+). It carries out the reaction (2R,3R)-2,3-dihydroxy-3-methylpentanoate + NADP(+) = (S)-2-ethyl-2-hydroxy-3-oxobutanoate + NADPH + H(+). Its pathway is amino-acid biosynthesis; L-isoleucine biosynthesis; L-isoleucine from 2-oxobutanoate: step 2/4. It participates in amino-acid biosynthesis; L-valine biosynthesis; L-valine from pyruvate: step 2/4. Involved in the biosynthesis of branched-chain amino acids (BCAA). Catalyzes an alkyl-migration followed by a ketol-acid reduction of (S)-2-acetolactate (S2AL) to yield (R)-2,3-dihydroxy-isovalerate. In the isomerase reaction, S2AL is rearranged via a Mg-dependent methyl migration to produce 3-hydroxy-3-methyl-2-ketobutyrate (HMKB). In the reductase reaction, this 2-ketoacid undergoes a metal-dependent reduction by NADPH to yield (R)-2,3-dihydroxy-isovalerate. The sequence is that of Ketol-acid reductoisomerase (NADP(+)) from Paracoccus denitrificans (strain Pd 1222).